An 896-amino-acid polypeptide reads, in one-letter code: Bifunctional glutamine synthetase adenylyltransferase/adenylyl-removing enzyme (896 aa).

Residues 1-411 form an adenylyl removase region; the sequence is MSDNRLDTAR…LFNEILSEPE (411 aa). Residues 417 to 896 are adenylyl transferase; that stretch reads NSEWQWAWQD…EVFGEEAATV (480 aa).

This sequence belongs to the GlnE family. Requires Mg(2+) as cofactor.

It carries out the reaction [glutamine synthetase]-O(4)-(5'-adenylyl)-L-tyrosine + phosphate = [glutamine synthetase]-L-tyrosine + ADP. The catalysed reaction is [glutamine synthetase]-L-tyrosine + ATP = [glutamine synthetase]-O(4)-(5'-adenylyl)-L-tyrosine + diphosphate. Involved in the regulation of glutamine synthetase GlnA, a key enzyme in the process to assimilate ammonia. When cellular nitrogen levels are high, the C-terminal adenylyl transferase (AT) inactivates GlnA by covalent transfer of an adenylyl group from ATP to specific tyrosine residue of GlnA, thus reducing its activity. Conversely, when nitrogen levels are low, the N-terminal adenylyl removase (AR) activates GlnA by removing the adenylyl group by phosphorolysis, increasing its activity. The regulatory region of GlnE binds the signal transduction protein PII (GlnB) which indicates the nitrogen status of the cell. This chain is Bifunctional glutamine synthetase adenylyltransferase/adenylyl-removing enzyme, found in Neisseria meningitidis serogroup B (strain ATCC BAA-335 / MC58).